The primary structure comprises 110 residues: UPF0339 protein PA0329 (110 aa).

2 repeat units span residues 10 to 58 and 61 to 109. The disordered stretch occupies residues 91–110; that stretch reads EAGVQSVKRATPEAGLSDES.

This sequence belongs to the UPF0339 family. Duplicated subfamily.

In Pseudomonas aeruginosa (strain ATCC 15692 / DSM 22644 / CIP 104116 / JCM 14847 / LMG 12228 / 1C / PRS 101 / PAO1), this protein is UPF0339 protein PA0329.